The primary structure comprises 204 residues: Small ribosomal subunit protein uS4 (204 aa).

The interval 21–45 is disordered; that stretch reads GRPKSPINKREYGPGQHGQRRKKPS. The region spanning 93-156 is the S4 RNA-binding domain; sequence RRLDAVVYRM…KQLAMVLDSV (64 aa).

Belongs to the universal ribosomal protein uS4 family. As to quaternary structure, part of the 30S ribosomal subunit. Contacts protein S5. The interaction surface between S4 and S5 is involved in control of translational fidelity.

One of the primary rRNA binding proteins, it binds directly to 16S rRNA where it nucleates assembly of the body of the 30S subunit. Its function is as follows. With S5 and S12 plays an important role in translational accuracy. The chain is Small ribosomal subunit protein uS4 from Acidiphilium cryptum (strain JF-5).